We begin with the raw amino-acid sequence, 230 residues long: Glutathione S-transferase 2 (230 aa).

In terms of domain architecture, GST N-terminal spans 2–86; sequence AHFTLYSHAG…YLADKYDTDR (85 aa). In terms of domain architecture, GST C-terminal spans 93–230; the sequence is DDPEYYKLIQ…EELAKAKEQH (138 aa).

Belongs to the GST superfamily.

The catalysed reaction is RX + glutathione = an S-substituted glutathione + a halide anion + H(+). Involved in the oxidative stress response and detoxification. The chain is Glutathione S-transferase 2 (gst2) from Schizosaccharomyces pombe (strain 972 / ATCC 24843) (Fission yeast).